The following is a 309-amino-acid chain: Glutaminase (309 aa).

The substrate site is built by S64, N114, E160, N167, Y191, Y243, and V261.

It belongs to the glutaminase family. In terms of assembly, homotetramer.

It catalyses the reaction L-glutamine + H2O = L-glutamate + NH4(+). This is Glutaminase from Rhizobium johnstonii (strain DSM 114642 / LMG 32736 / 3841) (Rhizobium leguminosarum bv. viciae).